Consider the following 697-residue polypeptide: Elongation factor G (697 aa).

The region spanning 8–282 is the tr-type G domain; sequence ENTRNIGIMA…AIVDYMPSPV (275 aa). GTP is bound by residues 17 to 24, 81 to 85, and 135 to 138; these read AHIDAGKT, DTPGH, and NKMD.

The protein belongs to the TRAFAC class translation factor GTPase superfamily. Classic translation factor GTPase family. EF-G/EF-2 subfamily.

The protein resides in the cytoplasm. Its function is as follows. Catalyzes the GTP-dependent ribosomal translocation step during translation elongation. During this step, the ribosome changes from the pre-translocational (PRE) to the post-translocational (POST) state as the newly formed A-site-bound peptidyl-tRNA and P-site-bound deacylated tRNA move to the P and E sites, respectively. Catalyzes the coordinated movement of the two tRNA molecules, the mRNA and conformational changes in the ribosome. This is Elongation factor G from Acetivibrio thermocellus (strain ATCC 27405 / DSM 1237 / JCM 9322 / NBRC 103400 / NCIMB 10682 / NRRL B-4536 / VPI 7372) (Clostridium thermocellum).